The chain runs to 620 residues: Endoglucanase 6 (620 aa).

Residues 1-22 (MEKFAPVAALLLLLLCFPVAFS) form the signal peptide. The active-site Nucleophile is D78. Catalysis depends on residues H411, D463, and E472. Residues N554 and N564 are each glycosylated (N-linked (GlcNAc...) asparagine).

Belongs to the glycosyl hydrolase 9 (cellulase E) family.

It localises to the secreted. The enzyme catalyses Endohydrolysis of (1-&gt;4)-beta-D-glucosidic linkages in cellulose, lichenin and cereal beta-D-glucans.. This chain is Endoglucanase 6, found in Arabidopsis thaliana (Mouse-ear cress).